The sequence spans 195 residues: A-type ATP synthase subunit E (195 aa).

The protein belongs to the V-ATPase E subunit family. As to quaternary structure, has multiple subunits with at least A(3), B(3), C, D, E, F, H, I and proteolipid K(x).

Its subcellular location is the cell membrane. Its function is as follows. Component of the A-type ATP synthase that produces ATP from ADP in the presence of a proton gradient across the membrane. The chain is A-type ATP synthase subunit E from Halobacterium salinarum (strain ATCC 29341 / DSM 671 / R1).